The primary structure comprises 100 residues: MVKSAMKIVILILFVLLIRVESKRNGYPDISDGKSSTCRTTVEDSEEDFCVNVCKSIQGRTGNCCLGTCFCFDLPDEQKIVDVMDTTIEYCEWDEEEEEE.

The signal sequence occupies residues 1 to 22 (MVKSAMKIVILILFVLLIRVES). In terms of domain architecture, LCN-type CS-alpha/beta spans 24 to 92 (RNGYPDISDG…VMDTTIEYCE (69 aa)). Intrachain disulfides connect C38/C64, C50/C69, C54/C71, and C65/C91.

This sequence belongs to the long (4 C-C) scorpion toxin superfamily. Sodium channel inhibitor family. In terms of tissue distribution, expressed by the venom gland.

Its subcellular location is the secreted. Putative sodium channel toxin. The polypeptide is Putative sodium channel toxin Ts26 (Tityus serrulatus (Brazilian scorpion)).